The chain runs to 344 residues: MRVLGIETSCDETGVAVYDTEKGLLAHQLYSQVKLHADYGGVVPELASRDHVRKTLPLIKAALKEAGISHQQLDGIAYTMGPGLVGALLVGACIGRSLAFGWNLPAVGVHHMEGHLLAPMLEENQPEFPFVALLVSGGHTQLVQVKGIGDYHLLGESVDDAAGEAFDKTAKLMGLDYPGGPRLAALAEQGNSDRFTFPRPMTDRPGLNFSFSGLKTSAANTLAANDSDEQTLADIARAFEDAVVDTLVIKCRRALKETGYKRLVVAGGVSANKHLRAKLEALLEKQKGQIFYPRTEFCTDNGAMIALAGALRLEAGEREPLAVKTHPRWPMTDLKPMVNISDAV.

Residues histidine 111 and histidine 115 each contribute to the Fe cation site. Substrate-binding positions include 134-138 (LVSGG), aspartate 167, glycine 180, and asparagine 272. Aspartate 300 provides a ligand contact to Fe cation.

Belongs to the KAE1 / TsaD family. It depends on Fe(2+) as a cofactor.

Its subcellular location is the cytoplasm. The enzyme catalyses L-threonylcarbamoyladenylate + adenosine(37) in tRNA = N(6)-L-threonylcarbamoyladenosine(37) in tRNA + AMP + H(+). Required for the formation of a threonylcarbamoyl group on adenosine at position 37 (t(6)A37) in tRNAs that read codons beginning with adenine. Is involved in the transfer of the threonylcarbamoyl moiety of threonylcarbamoyl-AMP (TC-AMP) to the N6 group of A37, together with TsaE and TsaB. TsaD likely plays a direct catalytic role in this reaction. The polypeptide is tRNA N6-adenosine threonylcarbamoyltransferase (Idiomarina loihiensis (strain ATCC BAA-735 / DSM 15497 / L2-TR)).